Here is a 185-residue protein sequence, read N- to C-terminus: Lysine-rich arabinogalactan protein 17 (185 aa).

A signal peptide spans 1–21 (MTRNILLTVTLICIVFITVGG). The disordered stretch occupies residues 25–160 (ATAPIHSPST…FSPAADDQSG (136 aa)). The span at 43–68 (SPAISPAAPTPESTEAPAKTPVEAPV) shows a compositional bias: low complexity. Residues 69–88 (EAPPSPTPASTPQISPPAPS) are compositionally biased toward pro residues. Positions 111 to 122 (TKHKKKTKKHKT) are enriched in basic residues. A compositionally biased stretch (pro residues) spans 135 to 146 (PPAPPGEAPGPG). Residue serine 159 is the site of GPI-anchor amidated serine attachment. Positions 160–185 (GAQRISVVIQMVGAAAIAWSLLVLAF) are cleaved as a propeptide — removed in mature form.

Belongs to the lysine-rich AGP family. O-glycosylated on the hydroxyproline residues. In terms of tissue distribution, predominantly expressed in open flowers. Also expressed in leaves and stems, and at a lower level in roots.

Its subcellular location is the cell membrane. Its function is as follows. Proteoglycan that seems to be implicated in diverse developmental roles such as differentiation, cell-cell recognition, embryogenesis and programmed cell death. The chain is Lysine-rich arabinogalactan protein 17 (AGP17) from Arabidopsis thaliana (Mouse-ear cress).